A 508-amino-acid chain; its full sequence is MGLPWYRVHTVVLNDPGRLISVHIMHTGLVSGWAGSMAFYELAVFDPSDPVLNPMWRQGMFVLPFMTRLGISKSWGGWDINGDSITDPGLWSYEGVAATHIILAGLMFLASMWHWVYWDLELFRDPRTGKPALDLPKIFGIHLFLSGLLCFGFGAFHVTGLFGPGIWVSDPYGITGRVQPIEPSWGADGFDPFNPGGIASHHIAAGILGILAGLFHLSVRPSFRLYKALRMGNVETVLSSSIAAVFWAAFVVSGTMWYGSAATPIELFGPTRYQWDLGYFNKEINKRVQASIASGSTASEAWSRIPEKLAFYDYIGNNPAKGGLFRAGAMNNGDGIAAGWLGHAVFKDKEGRELFVRRMPTFFETFPVVLLDKDGIVRADIPFRRAESKYSIEQVGVSVAFYGGELDGVTFKDPTTVKKYARRAQLGEIFEFDRARLKSDGVFRSSPRGWFTFGHLCFALLFFFGHIWHGARTIFRDVFAGIDPDLDEQVEFGAFQKLGDASTRKQAV.

Helical transmembrane passes span 21–36 (SVHI…WAGS), 101–115 (IILA…MWHW), 140–156 (GIHL…FGAF), 203–218 (IAAG…FHLS), 237–252 (VLSS…AFVV), and 457–472 (CFAL…HGAR).

Belongs to the PsbB/PsbC family. PsbB subfamily. As to quaternary structure, PSII is composed of 1 copy each of membrane proteins PsbA, PsbB, PsbC, PsbD, PsbE, PsbF, PsbH, PsbI, PsbJ, PsbK, PsbL, PsbM, PsbT, PsbX, PsbY, PsbZ, Psb30/Ycf12, at least 3 peripheral proteins of the oxygen-evolving complex and a large number of cofactors. It forms dimeric complexes. It depends on Binds multiple chlorophylls. PSII binds additional chlorophylls, carotenoids and specific lipids. as a cofactor.

The protein resides in the plastid. It is found in the chloroplast thylakoid membrane. Functionally, one of the components of the core complex of photosystem II (PSII). It binds chlorophyll and helps catalyze the primary light-induced photochemical processes of PSII. PSII is a light-driven water:plastoquinone oxidoreductase, using light energy to abstract electrons from H(2)O, generating O(2) and a proton gradient subsequently used for ATP formation. This is Photosystem II CP47 reaction center protein from Mesostigma viride (Green alga).